Here is a 381-residue protein sequence, read N- to C-terminus: GDP-mannose transporter (381 aa).

The Cytoplasmic portion of the chain corresponds to 1-39 (MVESKKTDDYAIEMDKIDQGSKNFEAAAPPQPRSVPSSS). Residues 40-60 (LSGNPVLPVLAYCGSSILMTV) traverse the membrane as a helical segment. Topologically, residues 61-68 (MNKYVLSG) are lumenal. A helical membrane pass occupies residues 69–89 (LDFNLNFFLLCVQSIVCIIAI). Residues 90–109 (QTCKFCGLITYRDFSADEAK) lie on the Cytoplasmic side of the membrane. The chain crosses the membrane as a helical span at residues 110-126 (KWFPISLLLIGMIYTGS). At 127–133 (KALQFLS) the chain is on the lumenal side. A helical transmembrane segment spans residues 134–150 (IPVYTIFKNLTIILIAY). Residues 151 to 159 (GEVLWFGGS) lie on the Cytoplasmic side of the membrane. Residues 160-181 (VTGLTLFSFGLMVLSSIIAAWA) traverse the membrane as a helical segment. Topologically, residues 182–199 (DIKHAVESSGDTSAQVST) are lumenal. Residues 200 to 220 (LNAGYIWMLINCLCTSSYVLG) traverse the membrane as a helical segment. The Cytoplasmic portion of the chain corresponds to 221–232 (MRKRIKLTNFKD). Residues 233 to 253 (FDTMFYNNLLSIPVLVVLTGL) traverse the membrane as a helical segment. Over 254–273 (MEDWSSANIDRNFPQADRSS) the chain is Lumenal. A helical membrane pass occupies residues 274 to 294 (IMFAMILSGLSSVFISYTSAW). At 295–302 (CVRVTSST) the chain is on the cytoplasmic side. Residues 303-323 (TYSMVGALNKLPIALSGLIFF) traverse the membrane as a helical segment. The Lumenal segment spans residues 324-326 (DAP). The chain crosses the membrane as a helical span at residues 327-347 (VTFPSVSAIAVGFVSGIVYAI). Residues 348–381 (AKIKQNAKPKTGVLPTSNPLVSASSQSMRDSLRS) are Cytoplasmic-facing.

This sequence belongs to the TPT transporter family. SLC35D subfamily. Homooligomer.

The protein resides in the golgi apparatus membrane. It is found in the cytoplasmic vesicle membrane. It localises to the endoplasmic reticulum membrane. Its function is as follows. Involved in the import of GDP-mannose from the cytoplasm into the Golgi lumen. In Aspergillus oryzae (strain ATCC 42149 / RIB 40) (Yellow koji mold), this protein is GDP-mannose transporter (gmt1).